The chain runs to 1150 residues: ATP-dependent helicase/deoxyribonuclease subunit B (1150 aa).

8–15 (GRAGSGKS) contacts ATP. [4Fe-4S] cluster is bound by residues C786, C1106, C1109, and C1115.

Belongs to the helicase family. AddB/RexB type 1 subfamily. In terms of assembly, heterodimer of AddA and AddB. Requires Mg(2+) as cofactor. [4Fe-4S] cluster is required as a cofactor.

In terms of biological role, the heterodimer acts as both an ATP-dependent DNA helicase and an ATP-dependent, dual-direction single-stranded exonuclease. Recognizes the chi site generating a DNA molecule suitable for the initiation of homologous recombination. The AddB subunit has 5' -&gt; 3' nuclease activity but not helicase activity. In Clostridium botulinum (strain Hall / ATCC 3502 / NCTC 13319 / Type A), this protein is ATP-dependent helicase/deoxyribonuclease subunit B.